Reading from the N-terminus, the 201-residue chain is MIKLIVGLGNPGAEYTATRHNAGFWLVDQLAREAGATLRDERRFHGFYAKARLFGEEVHLLEPQTYMNRSGQAVVALAHFFKILPTEILVAHDELDLPPGAAKLKLGGGSGGHNGLKDISAHLSSQQYWRLRIGIGHPRDLIPESARAGAKPDVANFVLKPPRKDEQDLIDAAIERALAVMPTAIKGETERAMMQLHRNGA.

Residue Y15 participates in tRNA binding. H20 functions as the Proton acceptor in the catalytic mechanism. Residues Y66, N68, and N114 each coordinate tRNA.

This sequence belongs to the PTH family. Monomer.

Its subcellular location is the cytoplasm. The enzyme catalyses an N-acyl-L-alpha-aminoacyl-tRNA + H2O = an N-acyl-L-amino acid + a tRNA + H(+). Its function is as follows. Hydrolyzes ribosome-free peptidyl-tRNAs (with 1 or more amino acids incorporated), which drop off the ribosome during protein synthesis, or as a result of ribosome stalling. Functionally, catalyzes the release of premature peptidyl moieties from peptidyl-tRNA molecules trapped in stalled 50S ribosomal subunits, and thus maintains levels of free tRNAs and 50S ribosomes. In Burkholderia mallei (strain NCTC 10247), this protein is Peptidyl-tRNA hydrolase.